Here is a 176-residue protein sequence, read N- to C-terminus: NAD(P)H-quinone oxidoreductase subunit J (176 aa).

It belongs to the complex I 30 kDa subunit family. In terms of assembly, NDH-1 can be composed of about 15 different subunits; different subcomplexes with different compositions have been identified which probably have different functions.

It is found in the cellular thylakoid membrane. The catalysed reaction is a plastoquinone + NADH + (n+1) H(+)(in) = a plastoquinol + NAD(+) + n H(+)(out). It catalyses the reaction a plastoquinone + NADPH + (n+1) H(+)(in) = a plastoquinol + NADP(+) + n H(+)(out). Its function is as follows. NDH-1 shuttles electrons from an unknown electron donor, via FMN and iron-sulfur (Fe-S) centers, to quinones in the respiratory and/or the photosynthetic chain. The immediate electron acceptor for the enzyme in this species is believed to be plastoquinone. Couples the redox reaction to proton translocation, and thus conserves the redox energy in a proton gradient. Cyanobacterial NDH-1 also plays a role in inorganic carbon-concentration. In Prochlorococcus marinus (strain MIT 9515), this protein is NAD(P)H-quinone oxidoreductase subunit J.